The primary structure comprises 1770 residues: Serine/threonine-protein kinase RIM15 (1770 aa).

A disordered region spans residues 334–358 (HSLSTFPQDNGNNNNNNNNNNNNNN). A compositionally biased stretch (low complexity) spans 343 to 358 (NGNNNNNNNNNNNNNN). A phosphoserine mark is found at serine 380 and serine 476. 2 disordered regions span residues 530-563 (TPTA…LDSN) and 583-694 (STIS…NSVL). Positions 583-601 (STISIDRDNNTNSRGSSMK) are enriched in polar residues. Over residues 611–632 (SRTSNSERPSSSSSRLGIRSRS) the composition is skewed to low complexity. The segment covering 637-660 (QKIEYSHVDNDDRTNEMLSRDKDS) has biased composition (basic and acidic residues). A compositionally biased stretch (low complexity) spans 669–692 (TTITSSTQATTTGTKTNSNNSTNS). Threonine 704 is subject to Phosphothreonine. A phosphoserine mark is found at serine 709, serine 733, serine 736, and serine 737. Threonine 747 bears the Phosphothreonine mark. The Protein kinase domain occupies 794 to 1254 (YDILKPISKG…IQEIKDHPYF (461 aa)). Residues 800–808 (ISKGAYGSV) and lysine 823 each bind ATP. Aspartate 918 functions as the Proton acceptor in the catalytic mechanism. The segment covering 970 to 980 (NNFTMNNNNSN) has biased composition (low complexity). Residues 970-1032 (NNFTMNNNNS…MTPTPSTNTV (63 aa)) form a disordered region. Residues 981–990 (HSQLSTPDSF) are compositionally biased toward polar residues. Over residues 1014–1031 (YSSTSNSHSMTPTPSTNT) the composition is skewed to low complexity. 3 positions are modified to phosphoserine: serine 1044, serine 1048, and serine 1064. Threonine 1075 bears the Phosphothreonine; by PHO85 mark. Residues 1255–1320 (KNVDWDHVYD…NTDVSELSAA (66 aa)) form the AGC-kinase C-terminal domain. Over residues 1378–1391 (TGYITPNGTGTTTT) the composition is skewed to low complexity. The disordered stretch occupies residues 1378–1403 (TGYITPNGTGTTTTSAKNSPNLKNLS). Over residues 1392–1401 (SAKNSPNLKN) the composition is skewed to polar residues. Serine 1421 bears the Phosphoserine mark. Disordered stretches follow at residues 1448-1507 (KSEH…STFG) and 1519-1572 (FSTR…PANT). The segment covering 1463–1481 (SSASLMGSSSDGSVSTPGS) has biased composition (low complexity). Phosphoserine is present on residues serine 1531, serine 1538, serine 1542, and serine 1565. In terms of domain architecture, Response regulatory spans 1636 to 1750 (DVLVCEPIPI…ELKKLVAKYA (115 aa)). Serine 1764 is subject to Phosphoserine.

Belongs to the protein kinase superfamily. Ser/Thr protein kinase family. In terms of assembly, interacts with the cyclin-dependent kinase (CDK) PHO85 and IGO1. Autophosphorylated. Phosphorylation by PKA strongly inhibits kinase activity. Phosphorylation by cyclin-CDK PHO80-PHO85 under favorable growth condition causes inactivation of RIM15 by promoting its export to the cytoplasm.

Its subcellular location is the cytoplasm. The protein localises to the nucleus. It catalyses the reaction L-seryl-[protein] + ATP = O-phospho-L-seryl-[protein] + ADP + H(+). The catalysed reaction is L-threonyl-[protein] + ATP = O-phospho-L-threonyl-[protein] + ADP + H(+). Its activity is regulated as follows. Kinase activity is inhibited by phosphorylation by cAMP-dependent protein kinase (PKA). Functionally, protein kinase that positively regulates proper entry into stationary phase of cells under nutrient starvation conditions. Involved in glycogen and trehalose accumulation, derepression of stress-induced genes, induction of thermotolerance and starvation resistance, and proper G1 cell cycle arrest. Also involved in the activation of a meiotic genes activation pathway. Phosphorylates IGO1 and IGO2, both involved in the TORC1 control of gene expression and chronological life span. This chain is Serine/threonine-protein kinase RIM15 (RIM15), found in Saccharomyces cerevisiae (strain ATCC 204508 / S288c) (Baker's yeast).